A 925-amino-acid chain; its full sequence is Nonribosomal peptide synthetase apvA (925 aa).

Positions 15 to 436 (AREDSGHVVV…TGRAKENMII (422 aa)) are adenylation (A) domain. Positions 564-644 (EPQNDLEKTL…DLATALEKLQ (81 aa)) constitute a Carrier domain. S601 is modified (O-(pantetheine 4'-phosphoryl)serine). Residues 663–909 (PLWLVHPGAG…HYSMIGPDHV (247 aa)) are thioesterase (TE) domain.

This sequence belongs to the NRP synthetase family. In terms of tissue distribution, apvA specifically produces aspulvinone E in hyphea, in contrast to melA which produces aspulvinone E in conidia where it is converted to UV-protective Asp-melanin.

It carries out the reaction 2 3-(4-hydroxyphenyl)pyruvate + AH2 + 2 ATP + O2 = aspulvinone E + A + 2 AMP + CO2 + 2 diphosphate + H2O + H(+). Its pathway is secondary metabolite biosynthesis. In terms of biological role, nonribosomal peptide synthetase; part of the gene cluster that mediates the biosynthesis of aspulvinones. The nonribosomal peptide synthetase apvA is responsible for the production of aspulvinone E, the core structure of aspulvinones. ApvA first activates 4-hydroxyphenylpyruvate (HPPA) through its A domain to AMP-HPPA. The HPPA unit is then loaded to the T domain and eventually transferred to the TE domain. Upon loading of another HPPA unit to the T domain, the TE domain promotes the enolate formation on the unit attached. The next step involves head to tail Claisen condensation, followed by the keto-enol tautermerization and a nucleophilic attack on the carbonyl carbon to yield the furanone partial structure. A spontaneous oxidation at the beta-carbon of the thioester might occur in aerobic condition. The TE domain then catalyzes the hydrolysis of the thioester, followed by spontaneous decarboxylation, dehydroxylation and keto-enol tautermerization to give the aspulvinone core. Aspulvinone E is highly unstable and converted to isoaspulvinone E in the presence of light. The structural diversity of the aspulvinones suggests that other tailoring enzymes are involved and have still to be identified. The chain is Nonribosomal peptide synthetase apvA from Aspergillus terreus (strain NIH 2624 / FGSC A1156).